The primary structure comprises 401 residues: Argininosuccinate synthase (401 aa).

Residue 8-16 (AYSGGLDTS) participates in ATP binding. Tyr-85 contributes to the L-citrulline binding site. Gly-115 is an ATP binding site. Thr-117, Asn-121, and Asp-122 together coordinate L-aspartate. Asn-121 lines the L-citrulline pocket. L-citrulline contacts are provided by Arg-125, Ser-173, Glu-258, and Tyr-270.

It belongs to the argininosuccinate synthase family. Type 1 subfamily. As to quaternary structure, homotetramer.

The protein resides in the cytoplasm. It catalyses the reaction L-citrulline + L-aspartate + ATP = 2-(N(omega)-L-arginino)succinate + AMP + diphosphate + H(+). Its pathway is amino-acid biosynthesis; L-arginine biosynthesis; L-arginine from L-ornithine and carbamoyl phosphate: step 2/3. The protein is Argininosuccinate synthase of Staphylococcus aureus (strain Mu3 / ATCC 700698).